Consider the following 488-residue polypeptide: ATP synthase subunit beta (488 aa).

Residue 164–171 (GGAGVGKT) participates in ATP binding.

It belongs to the ATPase alpha/beta chains family. F-type ATPases have 2 components, CF(1) - the catalytic core - and CF(0) - the membrane proton channel. CF(1) has five subunits: alpha(3), beta(3), gamma(1), delta(1), epsilon(1). CF(0) has four main subunits: a(1), b(1), b'(1) and c(9-12).

It localises to the cellular thylakoid membrane. The enzyme catalyses ATP + H2O + 4 H(+)(in) = ADP + phosphate + 5 H(+)(out). In terms of biological role, produces ATP from ADP in the presence of a proton gradient across the membrane. The catalytic sites are hosted primarily by the beta subunits. This chain is ATP synthase subunit beta, found in Prochlorococcus marinus (strain MIT 9313).